An 82-amino-acid chain; its full sequence is Sec-independent protein translocase protein TatA (82 aa).

The helical transmembrane segment at 1 to 21 (MGSFSIWHWLIVLLIVVMVFG) threads the bilayer. The segment at 46-82 (GASTDDSATTSAPAGQVTNNSTAADKTTIDVEAKHKS) is disordered. Residues 49-70 (TDDSATTSAPAGQVTNNSTAAD) show a composition bias toward polar residues. Residues 72–82 (TTIDVEAKHKS) are compositionally biased toward basic and acidic residues.

Belongs to the TatA/E family. As to quaternary structure, the Tat system comprises two distinct complexes: a TatABC complex, containing multiple copies of TatA, TatB and TatC subunits, and a separate TatA complex, containing only TatA subunits. Substrates initially bind to the TatABC complex, which probably triggers association of the separate TatA complex to form the active translocon.

It localises to the cell inner membrane. Part of the twin-arginine translocation (Tat) system that transports large folded proteins containing a characteristic twin-arginine motif in their signal peptide across membranes. TatA could form the protein-conducting channel of the Tat system. The protein is Sec-independent protein translocase protein TatA of Acidovorax sp. (strain JS42).